The primary structure comprises 249 residues: tRNA pseudouridine synthase A (249 aa).

Residue Asp-53 is the Nucleophile of the active site. Tyr-111 serves as a coordination point for substrate.

This sequence belongs to the tRNA pseudouridine synthase TruA family. In terms of assembly, homodimer.

The catalysed reaction is uridine(38/39/40) in tRNA = pseudouridine(38/39/40) in tRNA. Formation of pseudouridine at positions 38, 39 and 40 in the anticodon stem and loop of transfer RNAs. The chain is tRNA pseudouridine synthase A from Streptococcus equi subsp. zooepidemicus (strain MGCS10565).